A 139-amino-acid chain; its full sequence is Nucleoside diphosphate kinase (139 aa).

Lys-10, Phe-58, Arg-86, Thr-92, Arg-103, and Asn-113 together coordinate ATP. The Pros-phosphohistidine intermediate role is filled by His-116.

This sequence belongs to the NDK family. Homotetramer. Mg(2+) is required as a cofactor.

The protein resides in the cytoplasm. The enzyme catalyses a 2'-deoxyribonucleoside 5'-diphosphate + ATP = a 2'-deoxyribonucleoside 5'-triphosphate + ADP. It carries out the reaction a ribonucleoside 5'-diphosphate + ATP = a ribonucleoside 5'-triphosphate + ADP. In terms of biological role, major role in the synthesis of nucleoside triphosphates other than ATP. The ATP gamma phosphate is transferred to the NDP beta phosphate via a ping-pong mechanism, using a phosphorylated active-site intermediate. The protein is Nucleoside diphosphate kinase of Caulobacter sp. (strain K31).